Consider the following 346-residue polypeptide: Phosphoribosylformylglycinamidine cyclo-ligase (346 aa).

This sequence belongs to the AIR synthase family.

The protein resides in the cytoplasm. It catalyses the reaction 2-formamido-N(1)-(5-O-phospho-beta-D-ribosyl)acetamidine + ATP = 5-amino-1-(5-phospho-beta-D-ribosyl)imidazole + ADP + phosphate + H(+). Its pathway is purine metabolism; IMP biosynthesis via de novo pathway; 5-amino-1-(5-phospho-D-ribosyl)imidazole from N(2)-formyl-N(1)-(5-phospho-D-ribosyl)glycinamide: step 2/2. This chain is Phosphoribosylformylglycinamidine cyclo-ligase, found in Bacillus pumilus (strain SAFR-032).